We begin with the raw amino-acid sequence, 324 residues long: tRNA pseudouridine synthase B (324 aa).

The active-site Nucleophile is the D49.

This sequence belongs to the pseudouridine synthase TruB family. Type 1 subfamily.

It carries out the reaction uridine(55) in tRNA = pseudouridine(55) in tRNA. Functionally, responsible for synthesis of pseudouridine from uracil-55 in the psi GC loop of transfer RNAs. The protein is tRNA pseudouridine synthase B of Brucella anthropi (strain ATCC 49188 / DSM 6882 / CCUG 24695 / JCM 21032 / LMG 3331 / NBRC 15819 / NCTC 12168 / Alc 37) (Ochrobactrum anthropi).